The following is a 688-amino-acid chain: Sciellin (688 aa).

Polar residues predominate over residues 1–25 (MSNVTLRKMSPTGNEMKSTTQGTTR). Residues 1–29 (MSNVTLRKMSPTGNEMKSTTQGTTRKQQD) form a disordered region. The residue at position 83 (K83) is an N6-acetyllysine. Residues 134–231 (QPGGSLNANT…TNRSAERNIR (98 aa)) form a disordered region. Residues 140 to 154 (NANTSNTIASTSATT) are compositionally biased toward low complexity. The segment covering 186-195 (VHPPIPPKPS) has biased composition (pro residues). 16 consecutive repeat copies span residues 251–266 (GEEL…SLNR), 267–286 (NQGL…REKR), 287–306 (AKSL…DGKG), 307–326 (IQSL…NEKG), 327–346 (RQNL…TSRR), 347–366 (SEDL…NTTG), 367–386 (KKDL…NITR), 387–406 (GQSL…SNQG), 407–426 (SKDL…STEG), 427–446 (GQSL…TNQG), 447–465 (NQDL…KSSE), 466–484 (QGLD…NTDG), 485–504 (KQDL…NNQR), 505–523 (NQDL…RNNQ), 524–543 (SQDL…NTNR), and 544–563 (DQNL…NKNG). A 16 X approximate tandem repeats region spans residues 251–563 (GEELDNLIKM…NSHVSENKNG (313 aa)). S289 is modified (phosphoserine). Residues 340 to 373 (MNKTSRRSEDLDNATEVNPKGHENTTGKKDLDGL) are disordered. Residues 358–373 (PKGHENTTGKKDLDGL) are compositionally biased toward basic and acidic residues. S389 carries the phosphoserine modification. The 67-residue stretch at 619–685 (DMCTYCRKPL…EPCYSKIMAK (67 aa)) folds into the LIM zinc-binding domain.

As to expression, highly expressed in esophagus. It is also expressed in keratinocytes, amniotic tissue, foreskin stratum spinosum and stratum granulosum, hair follicle and nail.

Its subcellular location is the cytoplasm. It is found in the membrane. Functionally, may function in the assembly or regulation of proteins in the cornified envelope. The LIM domain may be involved in homotypic or heterotypic associations and may function to localize sciellin to the cornified envelope. In Homo sapiens (Human), this protein is Sciellin (SCEL).